A 426-amino-acid chain; its full sequence is Glutamate-1-semialdehyde 2,1-aminomutase (426 aa).

An N6-(pyridoxal phosphate)lysine modification is found at lysine 265.

It belongs to the class-III pyridoxal-phosphate-dependent aminotransferase family. HemL subfamily. In terms of assembly, homodimer. Pyridoxal 5'-phosphate is required as a cofactor.

The protein localises to the cytoplasm. It catalyses the reaction (S)-4-amino-5-oxopentanoate = 5-aminolevulinate. The protein operates within porphyrin-containing compound metabolism; protoporphyrin-IX biosynthesis; 5-aminolevulinate from L-glutamyl-tRNA(Glu): step 2/2. The chain is Glutamate-1-semialdehyde 2,1-aminomutase from Escherichia coli (strain K12 / DH10B).